We begin with the raw amino-acid sequence, 589 residues long: Probable translation initiation factor IF-2 (589 aa).

In terms of domain architecture, tr-type G spans 5 to 219; it reads IRTPIVCVLG…IMIGLAQRYL (215 aa). A G1 region spans residues 14–21; the sequence is GHVDHGKT. 14–21 provides a ligand contact to GTP; that stretch reads GHVDHGKT. The tract at residues 39–43 is G2; it reads AITQH. The interval 75–78 is G3; sequence DTPG. GTP-binding positions include 75–79 and 129–132; these read DTPGH and TKLD. Residues 129–132 form a G4 region; sequence TKLD. The segment at 197–199 is G5; it reads SSM.

The protein belongs to the TRAFAC class translation factor GTPase superfamily. Classic translation factor GTPase family. IF-2 subfamily.

Functionally, function in general translation initiation by promoting the binding of the formylmethionine-tRNA to ribosomes. Seems to function along with eIF-2. The sequence is that of Probable translation initiation factor IF-2 from Methanocorpusculum labreanum (strain ATCC 43576 / DSM 4855 / Z).